We begin with the raw amino-acid sequence, 350 residues long: tRNA uridine(34) hydroxylase (350 aa).

In terms of domain architecture, Rhodanese spans 146-240 (DDPDALFIDM…YARKAREQGL (95 aa)). Residue Cys200 is the Cysteine persulfide intermediate of the active site.

Belongs to the TrhO family.

The enzyme catalyses uridine(34) in tRNA + AH2 + O2 = 5-hydroxyuridine(34) in tRNA + A + H2O. Its function is as follows. Catalyzes oxygen-dependent 5-hydroxyuridine (ho5U) modification at position 34 in tRNAs, the first step in 5-carboxymethoxyuridine (cmo5U) biosynthesis. May be part of an alternate pathway, which is able to bypass cmo5U biogenesis in a subset of tRNAs under aerobic conditions. This is tRNA uridine(34) hydroxylase from Escherichia coli O45:K1 (strain S88 / ExPEC).